We begin with the raw amino-acid sequence, 315 residues long: Petrobactin import system permease protein YclO (315 aa).

9 helical membrane passes run 7-27 (IALL…YDLG), 40-60 (VAAI…FQTI), 76-96 (LYML…MVIM), 100-120 (INFI…YQIM), 128-148 (IFFL…LSSF), 172-192 (INTD…VYVW), 223-243 (LIVV…IMFL), 262-282 (YLIA…QFVV), and 288-308 (FSTT…IYLL).

Belongs to the binding-protein-dependent transport system permease family. FecCD subfamily. As to quaternary structure, the complex is composed of two ATP-binding proteins (YclP), two transmembrane proteins (YclN and YclO) and a solute-binding protein (YclQ).

The protein localises to the cell membrane. Its function is as follows. Part of the ABC transporter complex YclNOPQ involved in uptake of ferric-petrobactin. Petrobactin is a photoreactive 3,4-catecholate siderophore produced by many members of the B.cereus group, including B.anthracis. Probably responsible for the translocation of the substrate across the membrane. This is Petrobactin import system permease protein YclO (yclO) from Bacillus subtilis (strain 168).